Here is a 1470-residue protein sequence, read N- to C-terminus: Membrane-associated guanylate kinase, WW and PDZ domain-containing protein 3 (1470 aa).

In terms of domain architecture, PDZ 1 spans 18-108; the sequence is CAVSWAGPPG…PIRLKTVKPG (91 aa). Positions 18 to 108 are interaction with ADRB1 and TGFA; it reads CAVSWAGPPG…PIRLKTVKPG (91 aa). One can recognise a Guanylate kinase-like domain in the interval 116–290; it reads RHYLSLQFQK…RSMDFRNYMM (175 aa). 123–130 provides a ligand contact to ATP; it reads FQKGSIDH. The tract at residues 184 to 266 is disordered; the sequence is TYDGNFYGTP…ETREMHSESS (83 aa). Over residues 193–204 the composition is skewed to pro residues; that stretch reads PKPPAEPSPFQP. At Ser236 the chain carries Phosphoserine. Residues 238–247 show a composition bias toward acidic residues; sequence LPEEEEDEDK. WW domains follow at residues 296–329 and 342–375; these read EPLPKNWEMAYTDTGTIYFIDHNTKTTTWLDPRL and GELPYGWEKIEDPQYGTYYVDHLNQKTQFENPVE. One can recognise a PDZ 2 domain in the interval 413–495; the sequence is RASLKKSTMG…NQYVNLTLCR (83 aa). Residues 413–495 form an interaction with PTEN region; the sequence is RASLKKSTMG…NQYVNLTLCR (83 aa). A disordered region spans residues 550 to 575; it reads LLSSDRLNGPSDSNEQRASLASSGSS. Polar residues predominate over residues 559–575; it reads PSDSNEQRASLASSGSS. In terms of domain architecture, PDZ 3 spans 581 to 657; sequence TIPLVKGPKG…GADVPLLILR (77 aa). Ser598 is modified (phosphoserine). The tract at residues 665-700 is disordered; the sequence is KTAKMKTDTKETSGSLETINEPTPQPMPFPPSIIRS. Positions 676 to 686 are enriched in polar residues; it reads TSGSLETINEP. Phosphoserine is present on Ser702. Positions 729-811 constitute a PDZ 4 domain; that stretch reads DVFLRKQESG…NGHVLLTVRR (83 aa). The segment at 729–811 is interaction with ADGRB1; it reads DVFLRKQESG…NGHVLLTVRR (83 aa). The tract at residues 818–847 is disordered; it reads KQPEDESPQAFSQSGSPRLNRTELPTRSAP. Positions 826–847 are enriched in polar residues; sequence QAFSQSGSPRLNRTELPTRSAP. Phosphoserine occurs at positions 833 and 916. Residues 852–939 enclose the PDZ 5 domain; it reads DVILQRKENE…TVTLTVVAEE (88 aa). Residues 852-939 form an interaction with LPAR2 and GRIN2B region; the sequence is DVILQRKENE…TVTLTVVAEE (88 aa). Residues 939–976 are disordered; that stretch reads EEHHGPPSGTNSARQSPALQHRPMGQAQATHIPGDRTA. Polar residues predominate over residues 946–956; it reads SGTNSARQSPA. Residues 1022 to 1104 enclose the PDZ 6 domain; the sequence is PVELERGPRG…KVLLLLRPGT (83 aa). Disordered stretches follow at residues 1124–1146 and 1167–1470; these read IYDEQPPPLPSSHSAATFEESHV and DTVQ…DKQL. Over residues 1175–1191 the composition is skewed to polar residues; that stretch reads TLNGSQPEMKYQSIQKN. 2 stretches are compositionally biased toward basic and acidic residues: residues 1193-1209 and 1230-1263; these read SKKDPSRSHGHGDKNLL and RHSEEHLEKIPRPLRSDPKGKSRDRSLSPRKGEN. The span at 1285 to 1304 shows a compositional bias: polar residues; it reads SSSPRKQQKIGGNSLSNTEG. Phosphoserine is present on Ser1321. 4 stretches are compositionally biased toward basic and acidic residues: residues 1326–1340, 1350–1361, 1377–1397, and 1422–1431; these read PEGKEKSGVSRKDLK, RSPEKRSSKVDE, VSEKEKGRKPGTGERSRDKTG, and EVTDRGKERA.

The protein belongs to the MAGUK family. In terms of assembly, interacts with ADRB1, ADGRB1, LPAR2/EDG4, FZD4, FZD7, GRIN2B, TGFA and VANGL2. Interacts with PTEN. Interacts with ADRB1, PTPRB and unidentified tyrosine phosphorylated proteins. Interacts with DLL1. Interacts with PRRG4 (via cytoplasmic domain).

It is found in the cell membrane. It localises to the cell junction. The protein resides in the tight junction. The protein localises to the nucleus. In terms of biological role, acts as a scaffolding protein at cell-cell junctions, thereby regulating various cellular and signaling processes. Cooperates with PTEN to modulate the kinase activity of AKT1. Its interaction with PTPRB and tyrosine phosphorylated proteins suggests that it may link receptor tyrosine phosphatase with its substrates at the plasma membrane. In polarized epithelial cells, involved in efficient trafficking of TGFA to the cell surface. Regulates the ability of LPAR2 to activate ERK and RhoA pathways. Regulates the JNK signaling cascade via its interaction with FZD4 and VANGL2. This Rattus norvegicus (Rat) protein is Membrane-associated guanylate kinase, WW and PDZ domain-containing protein 3 (Magi3).